The chain runs to 94 residues: Small ribosomal subunit protein bS20 (94 aa).

The segment covering Met1 to Arg10 has biased composition (basic and acidic residues). Residues Met1–Arg20 form a disordered region. Positions Asn11–Arg20 are enriched in basic residues.

It belongs to the bacterial ribosomal protein bS20 family.

Binds directly to 16S ribosomal RNA. The polypeptide is Small ribosomal subunit protein bS20 (Sorangium cellulosum (strain So ce56) (Polyangium cellulosum (strain So ce56))).